A 193-amino-acid chain; its full sequence is Ion-translocating oxidoreductase complex subunit A (193 aa).

Transmembrane regions (helical) follow at residues 5–25 (LLLF…FLGL), 47–67 (FVIT…LLPL), 72–92 (LRTM…EMVV), 102–122 (LLGI…VPLL), 134–154 (AIYG…FAGV), and 171–191 (SIAL…AGLV).

The protein belongs to the NqrDE/RnfAE family. As to quaternary structure, the complex is composed of six subunits: RnfA, RnfB, RnfC, RnfD, RnfE and RnfG.

Its subcellular location is the cell inner membrane. Part of a membrane-bound complex that couples electron transfer with translocation of ions across the membrane. The chain is Ion-translocating oxidoreductase complex subunit A from Erwinia tasmaniensis (strain DSM 17950 / CFBP 7177 / CIP 109463 / NCPPB 4357 / Et1/99).